The sequence spans 311 residues: Deoxyhypusine hydroxylase (311 aa).

5 HEAT-like PBS-type repeats span residues 69-95 (LKHEVAYVLGQTKNLHAAQYLRSVLEN), 102-128 (VRHEAAEALGALGDKDSLALLEDYFKN), 196-222 (ERYRAMFRLRDMGTDEACLALASGLDD), 228-254 (FKHEIAYVFGQLCNPVTVPALIKTLKD), and 261-287 (VRHEAAEALGSIATDECLPVLQSFLND). Fe cation contacts are provided by H71, E72, H104, and E105. Positions 230, 231, 263, and 264 each coordinate Fe cation.

This sequence belongs to the deoxyhypusine hydroxylase family. Fe(2+) is required as a cofactor.

Its subcellular location is the cytoplasm. It localises to the nucleus. The catalysed reaction is [eIF5A protein]-deoxyhypusine + AH2 + O2 = [eIF5A protein]-hypusine + A + H2O. It participates in protein modification; eIF5A hypusination. Its function is as follows. Catalyzes the hydroxylation of the N(6)-(4-aminobutyl)-L-lysine intermediate to form hypusine, an essential post-translational modification only found in mature eIF-5A factor. In Debaryomyces hansenii (strain ATCC 36239 / CBS 767 / BCRC 21394 / JCM 1990 / NBRC 0083 / IGC 2968) (Yeast), this protein is Deoxyhypusine hydroxylase.